A 263-amino-acid chain; its full sequence is MIVERIWTGNAYRNFNYLIACPETGEALAIDPLDHEKTLATARVKGWQITQVLNTHEHHDHTGGNAAVIAATGAKLIAHHKAGGRIAGVDRGVKAGDVIKVGKTVELECLDTPGHTMCHICLRSHTEQPALFSGDTLFNAGAGNVHNGGDVNALYATFAEQLARLPDDTLVYPGHDYIENNLRFTLAREPDNAAAKALLPSVTDHDPAKSAVTTLKDEKEFNTFLRLSSPSVIARLRESFPDLPDEPDARTVFAKLRELRNQW.

Residues H56, H58, D60, H61, H115, D135, and H175 each coordinate Zn(2+).

This sequence belongs to the metallo-beta-lactamase superfamily. Glyoxalase II family. Monomer. The cofactor is Zn(2+).

It catalyses the reaction an S-(2-hydroxyacyl)glutathione + H2O = a 2-hydroxy carboxylate + glutathione + H(+). Its pathway is secondary metabolite metabolism; methylglyoxal degradation; (R)-lactate from methylglyoxal: step 2/2. In terms of biological role, thiolesterase that catalyzes the hydrolysis of S-D-lactoyl-glutathione to form glutathione and D-lactic acid. The sequence is that of Hydroxyacylglutathione hydrolase from Polaromonas sp. (strain JS666 / ATCC BAA-500).